A 201-amino-acid chain; its full sequence is MQISPLLENLMEALRALPGVGPKSAQRMAYHLLQRNRSGGINLSKALNEAMTHIGHCRSCRTFTEEDECNICKNPRRQMSGQLCVVEMPEDIQAIEQTGQFSGRYFVLMGHLSPLDGIGPREIGLDLLQSRLENESFHEVILATNPTIEGDATANYIAEMCRIHNVKVTRIAHGIPVGGSLEMVDGTTLSHSFAGRRDVSL.

The C4-type zinc-finger motif lies at 57-72 (CRSCRTFTEEDECNIC). In terms of domain architecture, Toprim spans 81–176 (GQLCVVEMPE…KVTRIAHGIP (96 aa)).

This sequence belongs to the RecR family.

Functionally, may play a role in DNA repair. It seems to be involved in an RecBC-independent recombinational process of DNA repair. It may act with RecF and RecO. This Actinobacillus pleuropneumoniae serotype 5b (strain L20) protein is Recombination protein RecR.